A 280-amino-acid polypeptide reads, in one-letter code: UDP-3-O-acyl-N-acetylglucosamine deacetylase (280 aa).

Positions 77, 238, and 242 each coordinate Zn(2+). The active-site Proton donor is the histidine 265.

Belongs to the LpxC family. Zn(2+) is required as a cofactor.

It carries out the reaction a UDP-3-O-[(3R)-3-hydroxyacyl]-N-acetyl-alpha-D-glucosamine + H2O = a UDP-3-O-[(3R)-3-hydroxyacyl]-alpha-D-glucosamine + acetate. The protein operates within glycolipid biosynthesis; lipid IV(A) biosynthesis; lipid IV(A) from (3R)-3-hydroxytetradecanoyl-[acyl-carrier-protein] and UDP-N-acetyl-alpha-D-glucosamine: step 2/6. Functionally, catalyzes the hydrolysis of UDP-3-O-myristoyl-N-acetylglucosamine to form UDP-3-O-myristoylglucosamine and acetate, the committed step in lipid A biosynthesis. The protein is UDP-3-O-acyl-N-acetylglucosamine deacetylase of Trichormus variabilis (strain ATCC 29413 / PCC 7937) (Anabaena variabilis).